The chain runs to 138 residues: MSGTLLAFDFGTKSIGVAIGQRVTATARPLTAIKAQNGNPDWTLIEKLLKEWQPDDVIVGLPLNMDGTEQPLTARARTFANRLHGRFGIKVTLHDERLSTVEARAGLFERGGFRALNKGSVDSASAVVILESYFEQHG.

This sequence belongs to the YqgF nuclease family.

The protein resides in the cytoplasm. Functionally, could be a nuclease involved in processing of the 5'-end of pre-16S rRNA. The sequence is that of Putative pre-16S rRNA nuclease from Cronobacter sakazakii (strain ATCC BAA-894) (Enterobacter sakazakii).